We begin with the raw amino-acid sequence, 1969 residues long: Hybrid signal transduction histidine kinase B (1969 aa).

Over residues 1-10 (MEKSEQTNSF) the composition is skewed to polar residues. 5 disordered regions span residues 1–91 (MEKS…HETK), 218–335 (KINE…KTKQ), 412–436 (QQQQ…SSDK), 468–505 (NNIN…KNKL), and 551–598 (GSGG…YNNN). Positions 11 to 55 (ESSNNNNNNIDSNINNNLENNNNKNNNNNNNNNNNNNNNNNNIEN) are enriched in low complexity. The segment covering 56–65 (SIDKNNKEDN) has biased composition (basic and acidic residues). Residues 72 to 86 (SHRKHRTRLKSKKGN) show a composition bias toward basic residues. A compositionally biased stretch (polar residues) spans 242–252 (TNSSILKSSEQ). Over residues 280–292 (SSSSDEGSDNSKS) the composition is skewed to low complexity. Polar residues predominate over residues 293–304 (QHSSVNTPTLSR). A compositionally biased stretch (low complexity) spans 313–335 (SQQSQKQSQQQSQQPQQQNKTKQ). The segment covering 416–425 (QHHRHYHHHI) has biased composition (basic residues). Polar residues predominate over residues 469 to 492 (NINIQAPSTPVQSRNYPLFTTQSP). The segment covering 551 to 571 (GSGGGGSGGGGGGGGGGGGIG) has biased composition (gly residues). Residues 574–598 (SSFLDDNNNLNNGENFKNSNSYNNN) are compositionally biased toward low complexity. The next 5 membrane-spanning stretches (helical) occupy residues 660–680 (AYIL…STIL), 684–704 (EWFI…LGKI), 708–728 (MYLI…TSII), 747–767 (LVMI…VILI), and 795–815 (FGEL…YTIL). A Histidine kinase domain is found at 967-1188 (TVSHELRTPI…TFSFTIPCGI (222 aa)). H970 is modified (phosphohistidine; by autocatalysis). Disordered regions lie at residues 1359-1415 (ASKD…HQLI), 1521-1563 (GIAL…TTQS), 1617-1709 (NNNF…SSHS), and 1755-1832 (QKPQ…TAAA). The segment covering 1373 to 1398 (GDGGRSLSGGGGGVGSNGNGNGGGGL) has biased composition (gly residues). 2 stretches are compositionally biased toward low complexity: residues 1399–1410 (DSNISPSELSSS) and 1527–1549 (SSSK…SPNS). Composition is skewed to polar residues over residues 1554-1563 (ELGNGKTTQS) and 1626-1665 (KPST…SPHR). 2 stretches are compositionally biased toward low complexity: residues 1755-1774 (QKPQ…TSTQ) and 1781-1821 (KTTT…TTTT). The Response regulatory domain occupies 1840–1967 (KILLVEDNFV…DILIQMIKKH (128 aa)). D1889 is subject to 4-aspartylphosphate.

Its subcellular location is the membrane. It carries out the reaction ATP + protein L-histidine = ADP + protein N-phospho-L-histidine.. In terms of biological role, acts in the cytokinin signal transduction pathway that regulates spore germination. Required for the maintenance of spore dormancy. Does not appear to act as a cytokinin receptor. Probably undergoes ATP-dependent autophosphorylation at a conserved histidine residue in the kinase core, which is followed by transfer of the phosphoryl group to a conserved aspartate residue in the receiver domain. The protein is Hybrid signal transduction histidine kinase B (dhkB) of Dictyostelium discoideum (Social amoeba).